We begin with the raw amino-acid sequence, 193 residues long: MPSTVAPVKGPDHFLNLVFPERVFASYMSPLAQKHPKAALYIASLAGFIFGLLKLITFPVLCAAGLFVFPIKGIISSLCHRRLDACSGYMLATFLSLFSLALIIVGIVSCVAWAPEFIFPIISIGMALATTETCFQIYTHLFPALEHKPSSPLKIENTTTKLSRSSSAPDLSCPSLSTQPTSPNQSLSAYKKY.

A run of 4 helical transmembrane segments spans residues 40–56, 63–79, 86–110, and 117–138; these read LYIASLAGFIFGLLKLI, AAGLFVFPIKGIISSLC, CSGYMLATFLSLFSLALIIVGIVSC, and FIFPIISIGMALATTETCFQIY. Residues 158-193 are disordered; the sequence is TTTKLSRSSSAPDLSCPSLSTQPTSPNQSLSAYKKY.

This sequence belongs to the chlamydial CPn_0442/CT_006/TC_0274 family.

Its subcellular location is the cell membrane. This is an uncharacterized protein from Chlamydia muridarum (strain MoPn / Nigg).